Consider the following 579-residue polypeptide: Leucine-rich repeat-containing protein 15 (579 aa).

Residues Met-1 to Ala-21 form the signal peptide. Residues Tyr-22–Trp-53 enclose the LRRNT domain. At Tyr-22–Gly-536 the chain is on the extracellular side. 15 LRR repeats span residues Asn-54–Asn-75, Ala-78–Asn-99, Ser-102–Asp-123, Asn-126–Gln-147, Asn-150–His-171, Gly-174–His-195, Asn-198–Ala-219, Asn-222–Asn-243, Asn-246–Gln-267, His-270–Pro-291, Asn-294–His-315, Gln-318–Gly-339, Asn-342–Ser-363, Asn-366–Asn-387, and Gly-390–His-411. Asn-75 carries an N-linked (GlcNAc...) asparagine glycan. Asn-369 carries N-linked (GlcNAc...) asparagine glycosylation. In terms of domain architecture, LRRCT spans Asn-423 to Gly-473. Positions Val-476–Thr-509 are disordered. The segment covering Ser-485–Thr-506 has biased composition (low complexity). A helical transmembrane segment spans residues Leu-537–Ile-557. Topologically, residues Cys-558–Cys-579 are cytoplasmic.

Expressed in chodrocytes (at protein level).

It is found in the cell membrane. The polypeptide is Leucine-rich repeat-containing protein 15 (Lrrc15) (Mus musculus (Mouse)).